A 224-amino-acid chain; its full sequence is Glycerol-3-phosphate acyltransferase (224 aa).

6 helical membrane passes run 14–34 (INMIFYIVAFLFGGIPFGWLL), 70–90 (YLSILTIILDATKGLIVVLGA), 99–119 (TQWSIALLAILGHCYSPYLGF), 129–149 (IGSVLLLIPVEGICGLIIWGI), 162–182 (LIGVLGTIGLTFVLPYILPLP), and 185–205 (ISIIKQINTHTPLVLIGLFIF).

It belongs to the PlsY family. As to quaternary structure, probably interacts with PlsX.

It localises to the cell inner membrane. The enzyme catalyses an acyl phosphate + sn-glycerol 3-phosphate = a 1-acyl-sn-glycero-3-phosphate + phosphate. It functions in the pathway lipid metabolism; phospholipid metabolism. Functionally, catalyzes the transfer of an acyl group from acyl-phosphate (acyl-PO(4)) to glycerol-3-phosphate (G3P) to form lysophosphatidic acid (LPA). This enzyme utilizes acyl-phosphate as fatty acyl donor, but not acyl-CoA or acyl-ACP. This chain is Glycerol-3-phosphate acyltransferase, found in Helicobacter hepaticus (strain ATCC 51449 / 3B1).